A 108-amino-acid polypeptide reads, in one-letter code: VQ motif-containing protein 10 (108 aa).

The VQ motif lies at 29–38 (FKTVVQELTG). A disordered region spans residues 65–85 (IGEDTRQLHGGGGGGGRMGTT). Residues 73–82 (HGGGGGGGRM) show a composition bias toward gly residues.

As to quaternary structure, interacts with WRKY25, WRKY26 and WRKY33.

The protein resides in the nucleus. Functionally, may modulate WRKY transcription factor activities. The protein is VQ motif-containing protein 10 of Arabidopsis thaliana (Mouse-ear cress).